The following is a 158-amino-acid chain: NAD(P)H-quinone oxidoreductase subunit J, chloroplastic (158 aa).

It belongs to the complex I 30 kDa subunit family. NDH is composed of at least 16 different subunits, 5 of which are encoded in the nucleus.

It localises to the plastid. Its subcellular location is the chloroplast thylakoid membrane. It catalyses the reaction a plastoquinone + NADH + (n+1) H(+)(in) = a plastoquinol + NAD(+) + n H(+)(out). The enzyme catalyses a plastoquinone + NADPH + (n+1) H(+)(in) = a plastoquinol + NADP(+) + n H(+)(out). Its function is as follows. NDH shuttles electrons from NAD(P)H:plastoquinone, via FMN and iron-sulfur (Fe-S) centers, to quinones in the photosynthetic chain and possibly in a chloroplast respiratory chain. The immediate electron acceptor for the enzyme in this species is believed to be plastoquinone. Couples the redox reaction to proton translocation, and thus conserves the redox energy in a proton gradient. The chain is NAD(P)H-quinone oxidoreductase subunit J, chloroplastic from Arabis hirsuta (Hairy rock-cress).